The chain runs to 60 residues: DNA-directed RNA polymerase subunit Rpo6 (60 aa).

The protein belongs to the archaeal Rpo6/eukaryotic RPB6 RNA polymerase subunit family. Part of the RNA polymerase complex.

The protein resides in the cytoplasm. The enzyme catalyses RNA(n) + a ribonucleoside 5'-triphosphate = RNA(n+1) + diphosphate. In terms of biological role, DNA-dependent RNA polymerase (RNAP) catalyzes the transcription of DNA into RNA using the four ribonucleoside triphosphates as substrates. The sequence is that of DNA-directed RNA polymerase subunit Rpo6 from Picrophilus torridus (strain ATCC 700027 / DSM 9790 / JCM 10055 / NBRC 100828 / KAW 2/3).